The sequence spans 305 residues: UDP-3-O-acyl-N-acetylglucosamine deacetylase (305 aa).

Zn(2+) is bound by residues His79, His238, and Asp242. His265 serves as the catalytic Proton donor.

This sequence belongs to the LpxC family. Zn(2+) serves as cofactor.

The catalysed reaction is a UDP-3-O-[(3R)-3-hydroxyacyl]-N-acetyl-alpha-D-glucosamine + H2O = a UDP-3-O-[(3R)-3-hydroxyacyl]-alpha-D-glucosamine + acetate. It participates in glycolipid biosynthesis; lipid IV(A) biosynthesis; lipid IV(A) from (3R)-3-hydroxytetradecanoyl-[acyl-carrier-protein] and UDP-N-acetyl-alpha-D-glucosamine: step 2/6. Its function is as follows. Catalyzes the hydrolysis of UDP-3-O-myristoyl-N-acetylglucosamine to form UDP-3-O-myristoylglucosamine and acetate, the committed step in lipid A biosynthesis. This is UDP-3-O-acyl-N-acetylglucosamine deacetylase from Vibrio campbellii (strain ATCC BAA-1116).